A 255-amino-acid chain; its full sequence is Hydroxyacylglutathione hydrolase (255 aa).

His56, His58, Asp60, His61, His114, Asp133, and His171 together coordinate Zn(2+).

Belongs to the metallo-beta-lactamase superfamily. Glyoxalase II family. As to quaternary structure, monomer. Zn(2+) is required as a cofactor.

It carries out the reaction an S-(2-hydroxyacyl)glutathione + H2O = a 2-hydroxy carboxylate + glutathione + H(+). Its pathway is secondary metabolite metabolism; methylglyoxal degradation; (R)-lactate from methylglyoxal: step 2/2. Its function is as follows. Thiolesterase that catalyzes the hydrolysis of S-D-lactoyl-glutathione to form glutathione and D-lactic acid. The polypeptide is Hydroxyacylglutathione hydrolase (Nitrobacter hamburgensis (strain DSM 10229 / NCIMB 13809 / X14)).